The chain runs to 1818 residues: Unconventional myosin-Vb (1818 aa).

The region spanning 8–60 (TRYTRVWIPDPDEVWRSAELTKDYKEGDKSLQLRLEDDTILEYPVDVQNNQVP) is the Myosin N-terminal SH3-like domain. The segment at 21–40 (VWRSAELTKDYKEGDKSLQL) is requires for interaction with LIMA1. Positions 69–762 (VGENDLTALS…QVAYLEKLRA (694 aa)) constitute a Myosin motor domain. 163–170 (GESGAGKT) contributes to the ATP binding site. The actin-binding stretch occupies residues 641 to 663 (LNLLMETLNATTPHYVRCIKPND). 6 IQ domains span residues 765–794 (FREATIMIQKSVRGWLQRVKYRRLRAATLS), 788–817 (LRAATLSLQRFCRGYLARRLAEHLRRTRAA), 813–842 (RTRAAIVFQKQYRMLKARRAYRRVCRATVI), 836–865 (VCRATVIIQSFTRAMFVRRNYRQVLMEHKA), 861–890 (MEHKATIIQKYARGWMARKRFLRERDAAIV), and 884–913 (ERDAAIVIQCAFRRLKARQELKALKIEARS). 2 disordered regions span residues 1086–1120 (LRDEQTPGHRKNPSNQSSLESDSNYPSISTSEIGD) and 1161–1188 (QAQLEKGQQDSKKGQVEQQNNGLDVDQD). The segment covering 1098–1118 (PSNQSSLESDSNYPSISTSEI) has biased composition (polar residues). Coiled coils occupy residues 1140-1261 (MTVF…LILR) and 1313-1415 (LEAQ…ALAQ). Serine 1416 carries the post-translational modification Phosphoserine. The region spanning 1496–1773 (SSTINGIKKV…IRTIQAQLQE (278 aa)) is the Dilute domain.

This sequence belongs to the TRAFAC class myosin-kinesin ATPase superfamily. Myosin family. Component of the CART complex, at least composed of ACTN4, HGS/HRS, MYO5B and TRIM3. Interacts with RAB11FIP2. Interacts with RAB11A and RAB8A. Found in a complex with CFTR and RAB11A. Interacts with NPC1L1. Interacts with LIMA1.

The protein resides in the cytoplasm. In terms of biological role, may be involved in vesicular trafficking via its association with the CART complex. The CART complex is necessary for efficient transferrin receptor recycling but not for EGFR degradation. Required in a complex with RAB11A and RAB11FIP2 for the transport of NPC1L1 to the plasma membrane. Together with RAB11A participates in CFTR trafficking to the plasma membrane and TF (transferrin) recycling in nonpolarized cells. Together with RAB11A and RAB8A participates in epithelial cell polarization. Together with RAB25 regulates transcytosis. Required for proper localization of bile salt export pump ABCB11 at the apical/canalicular plasma membrane of hepatocytes. The polypeptide is Unconventional myosin-Vb (Myo5b) (Mus musculus (Mouse)).